Reading from the N-terminus, the 242-residue chain is Probable 2-phosphosulfolactate phosphatase (242 aa).

This sequence belongs to the ComB family. Mg(2+) is required as a cofactor.

The catalysed reaction is (2R)-O-phospho-3-sulfolactate + H2O = (2R)-3-sulfolactate + phosphate. The sequence is that of Probable 2-phosphosulfolactate phosphatase from Caldicellulosiruptor saccharolyticus (strain ATCC 43494 / DSM 8903 / Tp8T 6331).